Here is a 141-residue protein sequence, read N- to C-terminus: Small ribosomal subunit protein bS6 (141 aa).

Positions Thr97 to Glu141 are disordered. The segment covering Leu103 to Ser124 has biased composition (basic and acidic residues). The span at Ala125–Glu141 shows a compositional bias: acidic residues.

It belongs to the bacterial ribosomal protein bS6 family.

In terms of biological role, binds together with bS18 to 16S ribosomal RNA. This Pseudomonas fluorescens (strain ATCC BAA-477 / NRRL B-23932 / Pf-5) protein is Small ribosomal subunit protein bS6.